The primary structure comprises 598 residues: Nuclear receptor subfamily 4 group A member 2 (598 aa).

The disordered stretch occupies residues 1-22 (MPCVQAQYGSSPQGASPASQGY). Positions 7–18 (QYGSSPQGASPA) are enriched in polar residues. Residues 260-335 (EGLCAVCGDN…VGMVKEVVRT (76 aa)) constitute a DNA-binding region (nuclear receptor). 2 NR C4-type zinc fingers span residues 263–283 (CAVC…CEGC) and 299–318 (CLAN…CQYC). The short motif at 287 to 314 (FKRTVQKNAKYVCLANKNCPVDKRRRNR) is the Bipartite nuclear localization signal (NLS1) element. Positions 337–361 (SLKGRRGRLPSKPKSPQEPSPPSPP) are disordered. The Nuclear localization signal (NLS1) motif lies at 338–350 (LKGRRGRLPSKPK). The span at 352–361 (PQEPSPPSPP) shows a compositional bias: pro residues. In terms of domain architecture, NR LBD spans 360 to 595 (PPVSLISALV…AIIDKLFLDT (236 aa)). The nuclear export sequence (NES1) signature appears at 443–452 (FLELFVLRLA). The nuclear export sequence (NES2) signature appears at 568 to 577 (QGLQRIFYLK).

The protein belongs to the nuclear hormone receptor family. Interacts with SFPQ, NCOR2, SIN3A and HADC1. The interaction with NCOR2 increases in the absence of PITX3. Interacts with PER2.

The protein resides in the cytoplasm. It localises to the nucleus. In terms of biological role, transcriptional regulator which is important for the differentiation and maintenance of meso-diencephalic dopaminergic (mdDA) neurons during development. It is crucial for expression of a set of genes such as SLC6A3, SLC18A2, TH and DRD2 which are essential for development of mdDA neurons. This is Nuclear receptor subfamily 4 group A member 2 (NR4A2) from Pongo abelii (Sumatran orangutan).